A 782-amino-acid polypeptide reads, in one-letter code: uncharacterized protein (782 aa).

Residues 10 to 30 traverse the membrane as a helical segment; that stretch reads LLTITIGAVAVSSILLGGIFY. A compositionally biased stretch (basic and acidic residues) spans 57–76; the sequence is LDYQKARPSIKDSNLKEIPK. The segment at 57–171 is disordered; sequence LDYQKARPSI…PQPQQVPNNS (115 aa). The span at 77–97 shows a compositional bias: pro residues; the sequence is PKPQPKPKPQPTPFPDPIPTP. The segment covering 98-124 has biased composition (basic and acidic residues); it reads PKKEELKKPDIKPEEPKKPEIKPEPKP. Residues 125 to 135 show a composition bias toward pro residues; the sequence is EPIPQPAPPIE.

It to U.parvum UU046.

The protein resides in the membrane. This is an uncharacterized protein from Ureaplasma parvum serovar 3 (strain ATCC 700970).